Here is a 705-residue protein sequence, read N- to C-terminus: Translation initiation factor IF-2 (705 aa).

Positions 40 to 124 (DDQIKALDKK…QPAAPKEIPS (85 aa)) are disordered. The segment covering 41–58 (DQIKALDKKFKKEQKNDN) has biased composition (basic and acidic residues). Positions 59-77 (KQSTQNNHQKSNNQNQNKG) are enriched in low complexity. A compositionally biased stretch (basic residues) spans 94–108 (KGNKKNNRNNKKNNK). The tr-type G domain maps to 207–376 (ERPAVVTIMG…GLVAEVQELK (170 aa)). The tract at residues 216 to 223 (GHVDHGKT) is G1. 216-223 (GHVDHGKT) serves as a coordination point for GTP. A G2 region spans residues 241–245 (GITQH). The G3 stretch occupies residues 262-265 (DTPG). GTP-binding positions include 262–266 (DTPGH) and 316–319 (NKID). The interval 316–319 (NKID) is G4. A G5 region spans residues 352-354 (SAL).

This sequence belongs to the TRAFAC class translation factor GTPase superfamily. Classic translation factor GTPase family. IF-2 subfamily.

It is found in the cytoplasm. One of the essential components for the initiation of protein synthesis. Protects formylmethionyl-tRNA from spontaneous hydrolysis and promotes its binding to the 30S ribosomal subunits. Also involved in the hydrolysis of GTP during the formation of the 70S ribosomal complex. The sequence is that of Translation initiation factor IF-2 from Staphylococcus aureus (strain Mu3 / ATCC 700698).